The primary structure comprises 411 residues: Allantoate amidohydrolase (411 aa).

His-81, Asp-92, Glu-127, and His-190 together coordinate Zn(2+). Allantoate-binding residues include Arg-215, Asn-275, and Arg-288. A Zn(2+)-binding site is contributed by His-382.

This sequence belongs to the peptidase M20 family. As to quaternary structure, homodimer. Zn(2+) is required as a cofactor.

The protein resides in the cytoplasm. The enzyme catalyses allantoate + H2O + 2 H(+) = (S)-2-ureidoglycine + NH4(+) + CO2. It functions in the pathway nitrogen metabolism; (S)-allantoin degradation. With respect to regulation, sulfate could be an allosteric effector of the enzyme that is responsible for stabilizing substrate binding. In addition, this anion effector may act as a counterion during enzyme-mediated catalysis. In terms of biological role, involved in the anaerobic nitrogen utilization via the assimilation of allantoin. Catalyzes specifically the hydrolysis of allantoate to yield CO2, NH3 and S-ureidoglycine, which is unstable and readily undergoes a second deamination by S-ureidoglycine aminohydrolase AllE to yield S-ureidoglycolate and NH3. In vivo, the spontaneous release of S-ureidoglycolate and ammonia from S-ureidoglycine appears to be too slow to sustain an efficient flux of nitrogen. In Escherichia coli (strain K12), this protein is Allantoate amidohydrolase.